Reading from the N-terminus, the 202-residue chain is FMN-dependent NADH:quinone oxidoreductase 2 (202 aa).

Residues Ser-9, 15-17 (SAS), 95-98 (MYNF), and 139-142 (TAGG) contribute to the FMN site.

Belongs to the azoreductase type 1 family. In terms of assembly, homodimer. FMN is required as a cofactor.

The enzyme catalyses 2 a quinone + NADH + H(+) = 2 a 1,4-benzosemiquinone + NAD(+). The catalysed reaction is N,N-dimethyl-1,4-phenylenediamine + anthranilate + 2 NAD(+) = 2-(4-dimethylaminophenyl)diazenylbenzoate + 2 NADH + 2 H(+). Its function is as follows. Quinone reductase that provides resistance to thiol-specific stress caused by electrophilic quinones. Reduces both benzoquinones and naphthoquinones efficiently. Also exhibits azoreductase activity. Catalyzes the reductive cleavage of the azo bond in aromatic azo compounds to the corresponding amines. Preferred substrates are the large bis-azo dye Ponceau BS, amaranth and tropaeolin O. The sequence is that of FMN-dependent NADH:quinone oxidoreductase 2 from Pseudomonas aeruginosa (strain ATCC 15692 / DSM 22644 / CIP 104116 / JCM 14847 / LMG 12228 / 1C / PRS 101 / PAO1).